We begin with the raw amino-acid sequence, 599 residues long: Purine-uracil permease NCS1 (599 aa).

A run of 12 helical transmembrane segments spans residues 140 to 160 (LWIGLVVGVPTYYLAGSLVDL), 164 to 184 (WWQGIATVVTANLILLVPLVL), 218 to 238 (LVGCGWYGIETWIGGEAIFLL), 257 to 277 (TSPLEFSCFIVFWLAQLCIVW), 293 to 313 (ILISLTSCLLAWSYLKAGGFG), 327 to 347 (FWTLFFPSLTANISFWATLAL), 363 to 383 (IIGQVGLPVFMGLFTFVGVAV), 411 to 433 (TLLAIVGISLATLTTNIAANVVA), 445 to 465 (FFTFGRGAFLTAVLGIVFQPW), 474 to 494 (FVYTWLIGYSALLGPIGGIIL), 525 to 545 (YNVAAVVALVAGIIPVVPGFL), and 560 to 580 (VVYDNALFFSFIIAGFVYWII).

It belongs to the purine-cytosine permease (2.A.39) family. In terms of tissue distribution, expressed in roots, leaves, stems, flowers, siliques and seeds.

It localises to the plastid. Its subcellular location is the chloroplast envelope. The protein resides in the chloroplast membrane. Nucleobase-proton symporter that facilitates the uptake of nucleobases in the cells. Can transport adenine, guanine and uracil. Contributes to uracil import into plastids for plastidic uracil salvage which is essential for plant growth and development. This is Purine-uracil permease NCS1 from Arabidopsis thaliana (Mouse-ear cress).